A 1166-amino-acid chain; its full sequence is ATP-dependent helicase/deoxyribonuclease subunit B (1166 aa).

Residues 1-285 (MGAVFLSGRS…VRLEETKRHR (285 aa)) enclose the UvrD-like helicase ATP-binding domain. ATP is bound at residue 8-15 (GRSGSGKT). Residues 279–586 (EETKRHRHHP…KFALIPPALD (308 aa)) form the UvrD-like helicase C-terminal domain. Residues cysteine 801, cysteine 1121, cysteine 1124, and cysteine 1130 each contribute to the [4Fe-4S] cluster site.

Belongs to the helicase family. AddB/RexB type 1 subfamily. Heterodimer of AddA and AddB. Requires Mg(2+) as cofactor. The cofactor is [4Fe-4S] cluster.

In terms of biological role, the heterodimer acts as both an ATP-dependent DNA helicase and an ATP-dependent, dual-direction single-stranded exonuclease. Recognizes the chi site generating a DNA molecule suitable for the initiation of homologous recombination. The AddB subunit has 5' -&gt; 3' nuclease activity but not helicase activity. This is ATP-dependent helicase/deoxyribonuclease subunit B from Bacillus licheniformis (strain ATCC 14580 / DSM 13 / JCM 2505 / CCUG 7422 / NBRC 12200 / NCIMB 9375 / NCTC 10341 / NRRL NRS-1264 / Gibson 46).